The following is a 492-amino-acid chain: Catalase isozyme 3 (492 aa).

Catalysis depends on residues His65 and Asn138. Tyr347 is a heme binding site.

This sequence belongs to the catalase family. As to quaternary structure, homotetramer. Requires heme as cofactor. In terms of tissue distribution, abundant in green cotyledons, etiolated cotyledons, green hypocotyl and root, but not in young leaf.

It localises to the peroxisome. It carries out the reaction 2 H2O2 = O2 + 2 H2O. In terms of biological role, occurs in almost all aerobically respiring organisms and serves to protect cells from the toxic effects of hydrogen peroxide. The chain is Catalase isozyme 3 (CAT3) from Cucurbita pepo (Vegetable marrow).